The primary structure comprises 60 residues: Large ribosomal subunit protein bL32 (60 aa).

The protein belongs to the bacterial ribosomal protein bL32 family.

The protein is Large ribosomal subunit protein bL32 of Streptococcus pneumoniae serotype 19F (strain G54).